Here is a 703-residue protein sequence, read N- to C-terminus: Glycogen [starch] synthase, liver (703 aa).

At serine 8 the chain carries Phosphoserine; by PKA. A Phosphoserine modification is found at serine 11. Lysine 40 lines the UDP pocket. The UDP-alpha-D-glucose site is built by histidine 205 and arginine 211. Positions 291, 292, 294, 297, and 301 each coordinate alpha-D-glucose 6-phosphate. Arginine 331 is a UDP binding site. Arginine 331 provides a ligand contact to UDP-alpha-D-glucose. Histidine 501 is an alpha-D-glucose 6-phosphate binding site. Positions 510, 512, and 513 each coordinate UDP-alpha-D-glucose. Threonine 515 contacts UDP. Arginine 582 and arginine 586 together coordinate alpha-D-glucose 6-phosphate. Serine 627 carries the post-translational modification Phosphoserine. A disordered region spans residues 628–703; sequence PPTTEGFKYP…KKKLHGEYKN (76 aa). Phosphoserine; by GSK3-alpha and GSK3-beta occurs at positions 641, 645, 649, and 653. Residues 647–657 show a composition bias toward low complexity; the sequence is SGSQASSPQSS. Serine 657 bears the Phosphoserine; by CK2 mark. The span at 658-674 shows a compositional bias: acidic residues; sequence DVEDEVEDERYDEEEEA. The residue at position 683 (serine 683) is a Phosphoserine.

Belongs to the glycosyltransferase 3 family. Part of the glycogen synthase (GS)-glycogenin complex, a heterooctamer composed of a tetramer of GS and 2 dimers of glycogenin, where each GS protomer binds to one glycogenin subunit (via glycogenin C-terminus); the GS tetramer may dissociate from glycogenin dimers to continue glycogen polymerization on its own. May also form a heterooctamer complex with GYG1 (via GYG1 C-terminus). In terms of processing, primed phosphorylation at Ser-657 (site 5) by CSNK2A1 and CSNK2A2 is required for inhibitory phosphorylation at Ser-641 (site 3a), Ser-645 (site 3b), Ser-649 (site 3c) and Ser-653 (site 4) by GSK3A an GSK3B. Dephosphorylation at Ser-641 and Ser-645 by PP1 activates the enzyme. Phosphorylation at Ser-8 is not required for interaction with GYG1. Interaction with GYG1 does not regulate the phosphorylation at Ser-8 and Ser-641. As to expression, specifically expressed in liver (at protein level).

The enzyme catalyses [(1-&gt;4)-alpha-D-glucosyl](n) + UDP-alpha-D-glucose = [(1-&gt;4)-alpha-D-glucosyl](n+1) + UDP + H(+). It functions in the pathway glycan biosynthesis; glycogen biosynthesis. With respect to regulation, allosteric activation by glucose-6-phosphate. Phosphorylation reduces the activity towards UDP-glucose. When in the non-phosphorylated state, glycogen synthase does not require glucose-6-phosphate as an allosteric activator; when phosphorylated it does. In terms of biological role, glycogen synthase participates in the glycogen biosynthetic process along with glycogenin and glycogen branching enzyme. Extends the primer composed of a few glucose units formed by glycogenin by adding new glucose units to it. In this context, glycogen synthase transfers the glycosyl residue from UDP-Glc to the non-reducing end of alpha-1,4-glucan. This is Glycogen [starch] synthase, liver from Homo sapiens (Human).